The primary structure comprises 445 residues: Adenylyltransferase and sulfurtransferase MOCS3 (445 aa).

Positions 49 to 70 (LPPSAAAEVEPTGSPSSSSSAA) are disordered. ATP contacts are provided by residues glycine 106, aspartate 127, 134–138 (DNLHR), lysine 151, and 170–171 (NN). The Zn(2+) site is built by cysteine 211 and cysteine 214. Cysteine 228 functions as the Glycyl thioester intermediate; for adenylyltransferase activity in the catalytic mechanism. The Zn(2+) site is built by cysteine 286 and cysteine 289. The 102-residue stretch at 342 to 443 (SGRPHLLVDV…WAKEVDPSFL (102 aa)) folds into the Rhodanese domain. Cysteine 403 serves as the catalytic Cysteine persulfide intermediate; for sulfurtransferase activity.

In the N-terminal section; belongs to the HesA/MoeB/ThiF family. UBA4 subfamily. Zn(2+) serves as cofactor.

The protein resides in the cytoplasm. It localises to the cytosol. It carries out the reaction [molybdopterin-synthase sulfur-carrier protein]-C-terminal Gly-Gly + ATP + H(+) = [molybdopterin-synthase sulfur-carrier protein]-C-terminal Gly-Gly-AMP + diphosphate. The catalysed reaction is [molybdopterin-synthase sulfur-carrier protein]-C-terminal Gly-Gly-AMP + S-sulfanyl-L-cysteinyl-[cysteine desulfurase] + AH2 = [molybdopterin-synthase sulfur-carrier protein]-C-terminal-Gly-aminoethanethioate + L-cysteinyl-[cysteine desulfurase] + A + AMP + 2 H(+). It functions in the pathway tRNA modification; 5-methoxycarbonylmethyl-2-thiouridine-tRNA biosynthesis. The protein operates within cofactor biosynthesis; molybdopterin biosynthesis. In terms of biological role, plays a central role in 2-thiolation of mcm(5)S(2)U at tRNA wobble positions of cytosolic tRNA(Lys), tRNA(Glu) and tRNA(Gln). Also essential during biosynthesis of the molybdenum cofactor. Acts by mediating the C-terminal thiocarboxylation of sulfur carriers URM1 and MOCS2A. Its N-terminus first activates URM1 and MOCS2A as acyl-adenylates (-COAMP), then the persulfide sulfur on the catalytic cysteine is transferred to URM1 and MOCS2A to form thiocarboxylation (-COSH) of their C-terminus. The reaction probably involves hydrogen sulfide that is generated from the persulfide intermediate and that acts as a nucleophile towards URM1 and MOCS2A. Subsequently, a transient disulfide bond is formed. Does not use thiosulfate as sulfur donor; NFS1 probably acting as a sulfur donor for thiocarboxylation reactions. This is Adenylyltransferase and sulfurtransferase MOCS3 from Oryza sativa subsp. japonica (Rice).